Consider the following 312-residue polypeptide: Malate dehydrogenase (312 aa).

NAD(+) contacts are provided by residues 7-13 (GAAGGIG) and D34. Residues R81 and R87 each contribute to the substrate site. NAD(+) is bound by residues N94 and 117–119 (ITN). Residues N119 and R153 each contribute to the substrate site. H177 functions as the Proton acceptor in the catalytic mechanism. M227 contacts NAD(+).

This sequence belongs to the LDH/MDH superfamily. MDH type 1 family. Homodimer.

The catalysed reaction is (S)-malate + NAD(+) = oxaloacetate + NADH + H(+). Its function is as follows. Catalyzes the reversible oxidation of malate to oxaloacetate. This is Malate dehydrogenase from Citrobacter koseri (strain ATCC BAA-895 / CDC 4225-83 / SGSC4696).